The following is a 162-amino-acid chain: NRR repressor homolog 3 (162 aa).

Residues 1–80 (MDPTMPTPHT…GHEEEARDED (80 aa)) form a disordered region. Over residues 7 to 24 (TPHTISGTSPFPRNSSTA) the composition is skewed to polar residues. Residues 37–46 (PRHRRSRKRD) show a composition bias toward basic residues. Positions 69–80 (GHGHEEEARDED) are enriched in basic and acidic residues.

Belongs to the NPR1-interactor family. In terms of assembly, interacts with NPR1/NH1. Interacts with NPR3/NH3.

It is found in the nucleus. In terms of biological role, binds to and represses NPR1/NH1-mediated transcriptional activation of LG2 in vitro. This chain is NRR repressor homolog 3, found in Oryza sativa subsp. japonica (Rice).